Reading from the N-terminus, the 143-residue chain is Large ribosomal subunit protein uL15 (143 aa).

Over residues 1–13 the composition is skewed to basic residues; the sequence is MIRKKKKVKKIRG. The segment at 1-39 is disordered; that stretch reads MIRKKKKVKKIRGSRTCGGGSHKKRRGAGNKGGRGMAGG. Gly residues predominate over residues 29 to 38; that stretch reads GNKGGRGMAG.

Belongs to the universal ribosomal protein uL15 family. As to quaternary structure, part of the 50S ribosomal subunit.

Functionally, binds to the 23S rRNA. The chain is Large ribosomal subunit protein uL15 from Methanocaldococcus jannaschii (strain ATCC 43067 / DSM 2661 / JAL-1 / JCM 10045 / NBRC 100440) (Methanococcus jannaschii).